An 801-amino-acid chain; its full sequence is N,N'-diacetylchitobiose phosphorylase (801 aa).

Arg-333, Arg-343, Arg-349, Asp-350, Trp-490, and Asp-492 together coordinate N-acetyl-alpha-D-glucosamine 1-phosphate. The Proton donor role is filled by Asp-492. N-acetyl-D-glucosamine is bound by residues Asp-492, Lys-636, and Glu-637. Residues Glu-637, His-644, Gln-690, Thr-709, and Gly-710 each contribute to the N-acetyl-alpha-D-glucosamine 1-phosphate site.

The protein belongs to the glycosyl hydrolase 94 family. Homodimer.

It catalyses the reaction N,N'-diacetylchitobiose + phosphate = N-acetyl-alpha-D-glucosamine 1-phosphate + N-acetyl-D-glucosamine. Catalyzes the reversible phosphorolysis of chitobiose (N,N'-diacetylchitobiose or (GlcNAc)(2)) into N-acetyl-alpha-D-glucosamine 1-phosphate (GlcNAc-1-P) and N-acetyl-D-glucosamine (GlcNAc) with inversion of the anomeric configuration. In the synthetic reaction, is also active on glucose-1-phosphate with 10% activity as compared with that on GlcNAc-1-P. GlcNAc is the best acceptor substrate, but the enzyme can use aryl-beta-glycosides of GlcNAc as the acceptor substrate with 10-20% activities of GlcNAc. Shows no phosphorolytic activity on cellobiose. This chain is N,N'-diacetylchitobiose phosphorylase, found in Vibrio proteolyticus (Aeromonas proteolytica).